A 455-amino-acid chain; its full sequence is Probable glycine dehydrogenase (decarboxylating) subunit 1 (455 aa).

The protein belongs to the GcvP family. N-terminal subunit subfamily. The glycine cleavage system is composed of four proteins: P, T, L and H. In this organism, the P 'protein' is a heterodimer of two subunits.

The enzyme catalyses N(6)-[(R)-lipoyl]-L-lysyl-[glycine-cleavage complex H protein] + glycine + H(+) = N(6)-[(R)-S(8)-aminomethyldihydrolipoyl]-L-lysyl-[glycine-cleavage complex H protein] + CO2. Functionally, the glycine cleavage system catalyzes the degradation of glycine. The P protein binds the alpha-amino group of glycine through its pyridoxal phosphate cofactor; CO(2) is released and the remaining methylamine moiety is then transferred to the lipoamide cofactor of the H protein. The polypeptide is Probable glycine dehydrogenase (decarboxylating) subunit 1 (Francisella philomiragia subsp. philomiragia (strain ATCC 25017 / CCUG 19701 / FSC 153 / O#319-036)).